The following is a 493-amino-acid chain: MYNFLVKKSKCTETDALLIPYFEEKTNIPNEEINNKINILKKKEQFKGSYGEIFNITRTTDDNIQDIILLGLGKETEITKEKIRRAFGKAVNEIKRLKSKSVFLRFDSVEAIGLENTLKAMVEGLALGSYSFNKYKSDKKEEVEVTVHIGGHNINEEEVELCEKAIDEAMLLSETTCLARDLVNEPANNMYPETLAKEVKNIGSKYGFEVEVFDENQIEELKMESFLSVGKGSDNLPRLIVMRYFGDKDNMDQRLALVGKGLTYDSGGYSLKTNAGMVTMKADMGGAASVIGAISAIAKRNLKINVIAVVAACENLISGHAYKPGDIIGSMEGKTIEILNTDAEGRLTLIDAVTYAIEKEKASEIIDVATLTGAAVVSLGEDVTAVITNKDEFYGELREASYETGEKVWQMPSFEDYGKLIKSNIADLKNIGGKYAGTITAGLFIGEFIQNKPWLHLDIAGPAFSEKKGDYCPTGGTGAGVRTLYELANRRCK.

Lys-260 and Asp-265 together coordinate Mn(2+). Lys-272 is an active-site residue. Residues Asp-283, Asp-342, and Glu-344 each coordinate Mn(2+). Arg-346 is an active-site residue.

This sequence belongs to the peptidase M17 family. Mn(2+) is required as a cofactor.

The protein localises to the cytoplasm. It catalyses the reaction Release of an N-terminal amino acid, Xaa-|-Yaa-, in which Xaa is preferably Leu, but may be other amino acids including Pro although not Arg or Lys, and Yaa may be Pro. Amino acid amides and methyl esters are also readily hydrolyzed, but rates on arylamides are exceedingly low.. The catalysed reaction is Release of an N-terminal amino acid, preferentially leucine, but not glutamic or aspartic acids.. Its function is as follows. Presumably involved in the processing and regular turnover of intracellular proteins. Catalyzes the removal of unsubstituted N-terminal amino acids from various peptides. In Clostridium perfringens (strain 13 / Type A), this protein is Probable cytosol aminopeptidase.